Reading from the N-terminus, the 252-residue chain is tRNA (guanine-N(1)-)-methyltransferase (252 aa).

S-adenosyl-L-methionine contacts are provided by residues G113 and 133–138 (VGDFVL).

The protein belongs to the RNA methyltransferase TrmD family. As to quaternary structure, homodimer.

It is found in the cytoplasm. The enzyme catalyses guanosine(37) in tRNA + S-adenosyl-L-methionine = N(1)-methylguanosine(37) in tRNA + S-adenosyl-L-homocysteine + H(+). Specifically methylates guanosine-37 in various tRNAs. This Francisella tularensis subsp. holarctica (strain FTNF002-00 / FTA) protein is tRNA (guanine-N(1)-)-methyltransferase.